A 554-amino-acid polypeptide reads, in one-letter code: Glutamine--tRNA ligase (554 aa).

Positions 34 to 44 (PEPNGYLHIGH) match the 'HIGH' region motif. Residues 35–37 (EPN) and 41–47 (HIGHAKS) each bind ATP. L-glutamine-binding residues include aspartate 67 and tyrosine 212. ATP is bound by residues threonine 231, 261–262 (RL), and 269–271 (MSK). Residues 268 to 272 (VMSKR) carry the 'KMSKS' region motif. The segment at 317-324 (TKQDNTIE) is interaction with tRNA.

This sequence belongs to the class-I aminoacyl-tRNA synthetase family. As to quaternary structure, monomer.

It is found in the cytoplasm. It carries out the reaction tRNA(Gln) + L-glutamine + ATP = L-glutaminyl-tRNA(Gln) + AMP + diphosphate. The polypeptide is Glutamine--tRNA ligase (Escherichia coli (strain 55989 / EAEC)).